The following is a 531-amino-acid chain: MALDAFFFIVSLFLLFPSPSASESTTQFCSAGRENGVGSCGVSSTRILIKGGTVVNAHHQELADVYVENGIIVAVQPNIKVGDEVTVLDATGKFVMPGGIDPHTHLAMEFMGTETIDDFFSGQAAALAGGTTMHIDFVIPVNGNLVAGFEAYENKSRESCMDYGFHMAITKWDEGVSRDMEMLVKEKGINSFKFFLAYKGSLMVTDDLLLEGLKRCKSLGALAMVHAENGDAVFEGQKRMIELGITGPEGHALSRPPVLEGEATARAIRLARFINTPLYVVHVMSVDAMDEIAKARKSGQKVIGEPVVSGLILDDHWLWDPDFTIASKYVMSPPIRPVGHGKALQDALSTGILQLVGTDHCTFNSTQKALGLDDFRRIPNGVNGLEERMHLIWDTMVESGQLSATDYVRITSTECARIFNIYPRKGAILAGSDADIIILNPNSSYEISSKSHHSRSDTNVYEGRRGKGKVEVTIAGGRIVWENEELKVVPRSGKYIEMPPFSYLFDGIEKSDANYLSSLRAPVKRVRTEAT.

Zn(2+)-binding residues include His-103, His-105, and Lys-193. At Lys-193 the chain carries N6-carboxylysine. Tyr-198 is a substrate binding site. 2 residues coordinate Zn(2+): His-226 and His-282. Ser-332 contributes to the substrate binding site. Asp-359 is a binding site for Zn(2+). Asn-380 contacts substrate.

This sequence belongs to the metallo-dependent hydrolases superfamily. Hydantoinase/dihydropyrimidinase family. Homotetramer. Zn(2+) serves as cofactor. Carboxylation allows a single lysine to coordinate two zinc ions.

Its subcellular location is the endoplasmic reticulum. It carries out the reaction 5,6-dihydrouracil + H2O = 3-(carbamoylamino)propanoate + H(+). The protein operates within amino-acid biosynthesis; beta-alanine biosynthesis. Catalyzes the second step of the reductive pyrimidine degradation, the reversible hydrolytic ring opening of dihydropyrimidines. Can catalyze the ring opening of 5,6-dihydrouracil to N-carbamoyl-alanine and of 5,6-dihydrothymine to N-carbamoyl-amino isobutyrate. Involved in the recycling of nitrogen from nucleobases to general nitrogen metabolism. This chain is Dihydropyrimidinase, found in Arabidopsis thaliana (Mouse-ear cress).